The chain runs to 767 residues: Mst2 complex subunit nto1 (767 aa).

Residues 194–244 (DGRCVICNEAECENSNAIVFCDNCNTSVHQNCYGIPFVPEGQWFCKKCLLA) form a PHD-type 1 zinc finger. A C2HC pre-PHD-type zinc finger spans residues 248 to 281 (VICCAFCPDRDGAFCTTLDGRWCHTICAIAIPEI). The PHD-type 2 zinc finger occupies 305–363 (LVCCICKLRWGTCVQCSDKNCYAAYHITCARRAGFFYKIYSHSASYDSVDMETYCDKHT). The segment covering 724 to 752 (VTGQSNHALPNSVTKKNGTKQPYTKNSLP) has biased composition (polar residues). Positions 724–767 (VTGQSNHALPNSVTKKNGTKQPYTKNSLPFNERITRSKAKKNYS) are disordered.

In terms of assembly, component of the mst2 complex composed of at least eaf6, mst2, nto1, pdp3, ptf1, ptf2 and tfg3.

The protein localises to the cytoplasm. It is found in the nucleus. Its function is as follows. Component of the mst2 complex which is a highly specific H3 lysine 14 (H3K14) acetyltransferase that functions together with gcn5 to regulate global levels of H3K14 acetylation (H3K14ac), critical for DNA damage checkpoint activation. The chain is Mst2 complex subunit nto1 (nto1) from Schizosaccharomyces pombe (strain 972 / ATCC 24843) (Fission yeast).